A 453-amino-acid polypeptide reads, in one-letter code: CBL-interacting protein kinase 24 (453 aa).

Residues 18–271 (YEVGRTIGQG…IEQIREDTWF (254 aa)) enclose the Protein kinase domain. ATP contacts are provided by residues 24–32 (IGQGTFAKV) and Lys-47. The Proton acceptor role is filled by Asp-141. An activation loop region spans residues 159–186 (DFGLSTLAQKGVGLLHTTCGTPNYVAPE). Residues 310–336 (NDGGPLVMNAFEMITLSQGLDLSALFD) form the NAF domain. The tract at residues 343–372 (KRQTRFVSRKPAKTIVATIEVVAETMGLKV) is PPI.

It belongs to the protein kinase superfamily. CAMK Ser/Thr protein kinase family. SNF1 subfamily. In terms of assembly, interacts with CBL4. Requires Mn(2+) as cofactor.

It catalyses the reaction L-seryl-[protein] + ATP = O-phospho-L-seryl-[protein] + ADP + H(+). The catalysed reaction is L-threonyl-[protein] + ATP = O-phospho-L-threonyl-[protein] + ADP + H(+). In terms of biological role, involved in the regulatory pathway for the control of intracellular Na(+) and K(+) homeostasis and salt tolerance. Operates in synergy with CBL4 to activate the plasma membrane Na(+)/H(+) antiporter SOS1. CIPK serine-threonine protein kinases interact with CBL proteins. Binding of a CBL protein to the regulatory NAF domain of CIPK protein lead to the activation of the kinase in a calcium-dependent manner. This Oryza sativa subsp. japonica (Rice) protein is CBL-interacting protein kinase 24 (CIPK24).